The primary structure comprises 128 residues: Large ribosomal subunit protein eL22 (128 aa).

Position 62 is a phosphothreonine (T62). The residue at position 66 (S66) is a Phosphoserine. K69 carries the post-translational modification N6-succinyllysine.

It belongs to the eukaryotic ribosomal protein eL22 family. In terms of assembly, component of the large ribosomal subunit.

The protein localises to the cytoplasm. Functionally, component of the large ribosomal subunit. The ribosome is a large ribonucleoprotein complex responsible for the synthesis of proteins in the cell. This chain is Large ribosomal subunit protein eL22 (RPL22), found in Sus scrofa (Pig).